The sequence spans 240 residues: Transmembrane protein US19 (240 aa).

7 consecutive transmembrane segments (helical) span residues 29–49 (VLVA…WWLM), 64–84 (DPPS…FLLL), 96–116 (LPLL…LLMC), 123–143 (FVGA…ASLL), 153–173 (RLWL…LWLL), 176–196 (AAPF…LMLI), and 218–238 (LYVE…LWLW).

The protein belongs to the cytomegalovirus US12 family.

The protein localises to the host membrane. This Human cytomegalovirus (strain Merlin) (HHV-5) protein is Transmembrane protein US19 (US19).